A 514-amino-acid polypeptide reads, in one-letter code: Bifunctional purine biosynthesis protein PurH (514 aa).

One can recognise an MGS-like domain in the interval Met-1–Cys-146.

The protein belongs to the PurH family.

The enzyme catalyses (6R)-10-formyltetrahydrofolate + 5-amino-1-(5-phospho-beta-D-ribosyl)imidazole-4-carboxamide = 5-formamido-1-(5-phospho-D-ribosyl)imidazole-4-carboxamide + (6S)-5,6,7,8-tetrahydrofolate. It catalyses the reaction IMP + H2O = 5-formamido-1-(5-phospho-D-ribosyl)imidazole-4-carboxamide. It participates in purine metabolism; IMP biosynthesis via de novo pathway; 5-formamido-1-(5-phospho-D-ribosyl)imidazole-4-carboxamide from 5-amino-1-(5-phospho-D-ribosyl)imidazole-4-carboxamide (10-formyl THF route): step 1/1. It functions in the pathway purine metabolism; IMP biosynthesis via de novo pathway; IMP from 5-formamido-1-(5-phospho-D-ribosyl)imidazole-4-carboxamide: step 1/1. The polypeptide is Bifunctional purine biosynthesis protein PurH (Nostoc punctiforme (strain ATCC 29133 / PCC 73102)).